Here is a 237-residue protein sequence, read N- to C-terminus: tRNA (guanine-N(7)-)-methyltransferase (237 aa).

Positions 56, 81, 108, and 131 each coordinate S-adenosyl-L-methionine. D131 is a catalytic residue. Substrate-binding positions include K135, D167, and 204 to 207; that span reads TKFE.

It belongs to the class I-like SAM-binding methyltransferase superfamily. TrmB family.

It catalyses the reaction guanosine(46) in tRNA + S-adenosyl-L-methionine = N(7)-methylguanosine(46) in tRNA + S-adenosyl-L-homocysteine. Its pathway is tRNA modification; N(7)-methylguanine-tRNA biosynthesis. Functionally, catalyzes the formation of N(7)-methylguanine at position 46 (m7G46) in tRNA. The sequence is that of tRNA (guanine-N(7)-)-methyltransferase from Legionella pneumophila (strain Paris).